The chain runs to 135 residues: UPF0355 protein SACOL0457 (135 aa).

Belongs to the UPF0355 family.

The polypeptide is UPF0355 protein SACOL0457 (Staphylococcus aureus (strain COL)).